The following is a 1177-amino-acid chain: Topoisomerase 1-associated factor 1 (1177 aa).

Disordered stretches follow at residues 575-597, 791-815, 874-1001, and 1021-1177; these read AKQAKQADIEGDDEEQASEEEDL, REAWESQEQHSEGQKAPNPMIPVKS, LTEP…ADQE, and LLHG…SDSE. A compositionally biased stretch (acidic residues) spans 583-597; it reads IEGDDEEQASEEEDL. The span at 791 to 803 shows a compositional bias: basic and acidic residues; that stretch reads REAWESQEQHSEG. Acidic residues-rich tracts occupy residues 911–921 and 954–963; these read FGSDSEGDDNV and EEEEPDEEDL. The span at 981 to 991 shows a compositional bias: basic and acidic residues; it reads IKSDLYIHASD. Over residues 1086-1096 the composition is skewed to polar residues; sequence SLGQGSPSLQG. Composition is skewed to acidic residues over residues 1108–1118 and 1146–1155; these read EENELDFDDDL and TIDEDDDDEA.

This sequence belongs to the timeless family. As to quaternary structure, component of the fork protection complex (FPC) consisting of tof1 and csm3.

Its subcellular location is the nucleus. Functionally, forms a fork protection complex (FPC) with csm3 and which is required for chromosome segregation during meiosis and DNA damage repair. FPC coordinates leading and lagging strand synthesis and moves with the replication fork. FPC stabilizes replication forks in a configuration that is recognized by replication checkpoint sensors. The polypeptide is Topoisomerase 1-associated factor 1 (tof1) (Neosartorya fischeri (strain ATCC 1020 / DSM 3700 / CBS 544.65 / FGSC A1164 / JCM 1740 / NRRL 181 / WB 181) (Aspergillus fischerianus)).